Reading from the N-terminus, the 528-residue chain is Protein phosphatase 1 regulatory subunit 16A (528 aa).

A coiled-coil region spans residues serine 18–glutamine 45. The tract at residues threonine 19–alanine 59 is disordered. Basic and acidic residues predominate over residues alanine 40–alanine 58. ANK repeat units lie at residues proline 70–leucine 99, aspartate 103–alanine 132, glutamate 136–alanine 165, histidine 231–alanine 260, and aspartate 264–alanine 293. Disordered regions lie at residues arginine 330–arginine 351 and glutamine 367–arginine 421. Serine 433 is modified (phosphoserine). The disordered stretch occupies residues glutamine 462–proline 505. Cysteine 524 carries S-palmitoyl cysteine lipidation. Residue cysteine 525 is modified to Cysteine methyl ester. A lipid anchor (S-farnesyl cysteine) is attached at cysteine 525. Residues leucine 526–methionine 528 constitute a propeptide, removed in mature form.

In terms of assembly, binds PP1.

The protein localises to the cell membrane. Its function is as follows. Inhibits protein phosphatase 1 activity toward phosphorylase, myosin light chain and myosin substrates. The polypeptide is Protein phosphatase 1 regulatory subunit 16A (PPP1R16A) (Homo sapiens (Human)).